The chain runs to 167 residues: MIVLSRRISEPGTRVVSGTVTLDVDSRIKSRLRVTLDDGREAGLMLERGHLLRGGELLADAEGTQLIRVLAAPEAVSTVRCADPHLLARAAYHLGNRHVPLQIEPGLLRFQHDHVLDDMLRGLGLTVEAEQAPFEPEAGAYQSAPHGHSHSHAHGHDHPFVRLPAHS.

The tract at residues 137-158 (EAGAYQSAPHGHSHSHAHGHDH) is disordered.

This sequence belongs to the UreE family.

Its subcellular location is the cytoplasm. Involved in urease metallocenter assembly. Binds nickel. Probably functions as a nickel donor during metallocenter assembly. The polypeptide is Urease accessory protein UreE (Pseudomonas putida (strain ATCC 700007 / DSM 6899 / JCM 31910 / BCRC 17059 / LMG 24140 / F1)).